Consider the following 66-residue polypeptide: Cold shock-like protein CspLA (66 aa).

A CSD domain is found at 4–63; the sequence is GTVKWFNAEKGFGFIERENGDDVFVHFSAIQGDGFKSLDEGQAVTFDVEEGQRGPQAANV.

In terms of assembly, homodimer.

Its subcellular location is the cytoplasm. The protein is Cold shock-like protein CspLA (cspLA) of Listeria innocua serovar 6a (strain ATCC BAA-680 / CLIP 11262).